Reading from the N-terminus, the 307-residue chain is MNKKFTDEQQQQLIGHLTKKGFYRGANIKITIFLCGGDVANHQSWRHQLSQFLAKFSDVDIFYPEDLFDDLLAGQGQHSLLSLENILAEAVDVIILFPESPGSFTELGAFSNNENLRRKLICIQDAKFKSKRSFINYGPVRLLRKFNSKSVLRCSSNELKEMCDSSIDVARKLRLYKKLMASIKKVRKENKVSKDIGNILYAERFLLPCIYLLDSVNYRTLCELAFKAIKQDDVLSKIIVRSVVSRLINERKILQMTDGYQVTALGASYVRSVFDRKTLDRLRLEIMNFENRRKSTFNYDKIPYAHP.

Functionally, possible ribosyltransferase/DNA-binding component of antiviral defense system retron Ec86, composed of a non-coding RNA (ncRNA), a ribosyltransferase/DNA-binding protein and a reverse transcriptase (RT). Expression of the 3-gene retron confers protection against bacteriophages T5. At multiplicity of infection (MOI) of 0.02 cultures grow normally when infected with T5 without collapsing, at MOI 2 cultures enter growth stasis. The protein is Retron Ec86 putative ribosyltransferase/DNA-binding protein of Escherichia coli.